The sequence spans 196 residues: Vascular-related unknown protein 2 (196 aa).

Positions 84 to 130 (ANNINTNPKKRRIIHQHKEEEEEELQKGEEEEEDEEDTASSPSNKTK) are disordered. A compositionally biased stretch (acidic residues) spans 103–121 (EEEEELQKGEEEEEDEEDT).

Its function is as follows. Involved in the regulation of plant growth. The sequence is that of Vascular-related unknown protein 2 from Arabidopsis thaliana (Mouse-ear cress).